The chain runs to 343 residues: Apolipoprotein L6 (343 aa).

Residues M1 to E10 are compositionally biased toward basic and acidic residues. The disordered stretch occupies residues M1–L24.

The protein belongs to the apolipoprotein L family. Widely expressed; highly expressed in the uterus, fetal brain and spinal cord, also detected in heart, liver, lung, colon, spleen, thymus, prostate, placenta, adrenal gland, salivary and mammary gland.

Its subcellular location is the cytoplasm. Functionally, may affect the movement of lipids in the cytoplasm or allow the binding of lipids to organelles. This is Apolipoprotein L6 (APOL6) from Homo sapiens (Human).